A 217-amino-acid polypeptide reads, in one-letter code: Uridylate kinase (217 aa).

K5 to R9 is a binding site for ATP. G37 contacts UMP. ATP-binding residues include G38 and R42. UMP contacts are provided by residues D59 and F107–T113. N134, Y139, and D142 together coordinate ATP.

It belongs to the UMP kinase family. As to quaternary structure, homohexamer.

Its subcellular location is the cytoplasm. It catalyses the reaction UMP + ATP = UDP + ADP. Its pathway is pyrimidine metabolism; CTP biosynthesis via de novo pathway; UDP from UMP (UMPK route): step 1/1. Its activity is regulated as follows. Inhibited by UTP. In terms of biological role, catalyzes the reversible phosphorylation of UMP to UDP. The polypeptide is Uridylate kinase (Pyrobaculum calidifontis (strain DSM 21063 / JCM 11548 / VA1)).